The chain runs to 316 residues: Very-long-chain 3-oxooacyl-coA reductase let-767 (316 aa).

Residues 47 to 76 (ASWAVVTGATDGIGKAYAFELARRGFNVLL) and Asp-106 each bind NADP(+). Ser-189 provides a ligand contact to substrate. The active-site Proton acceptor is the Tyr-202. Lys-206 is a binding site for NADP(+).

The protein belongs to the short-chain dehydrogenases/reductases (SDR) family. 17-beta-HSD 3 subfamily. As to expression, expressed in the gut of larva and adult.

It carries out the reaction a very-long-chain (3R)-3-hydroxyacyl-CoA + NADP(+) = a very-long-chain 3-oxoacyl-CoA + NADPH + H(+). The catalysed reaction is (omega-1)-methyl-(3R)-hydroxy-fatty acyl-CoA + NADP(+) = (omega-1)-methyl-3-oxo-fatty acyl-CoA + NADPH + H(+). The enzyme catalyses a 17beta-hydroxy steroid + NADP(+) = a 17-oxo steroid + NADPH + H(+). Its pathway is lipid metabolism; fatty acid biosynthesis. Functionally, required for branched-chain fatty acid synthesis (such as (omega-1)-methyl-fatty acids). Catalyzes the reduction of the 3-keto-fatty acyl-CoA intermediate that is formed in each cycle of fatty acid elongation. Very long-chain fatty acids (VLCFAs) serve as precursors for ceramide and sphingolipids. Involved in hormone production as it metabolizes 4-androstendione (androst-4-ene-3,17-dione) into testosterone and estrone into estradiol (17beta-estradiol) in vitro, but the physiological steroid substrate is unknown. This chain is Very-long-chain 3-oxooacyl-coA reductase let-767 (let-767), found in Caenorhabditis elegans.